Consider the following 232-residue polypeptide: tRNA (guanine-N(1)-)-methyltransferase (232 aa).

Residue glycine 116 participates in S-adenosyl-L-methionine binding.

Belongs to the RNA methyltransferase TrmD family. Homodimer.

The protein resides in the cytoplasm. The enzyme catalyses guanosine(37) in tRNA + S-adenosyl-L-methionine = N(1)-methylguanosine(37) in tRNA + S-adenosyl-L-homocysteine + H(+). Specifically methylates guanosine-37 in various tRNAs. This chain is tRNA (guanine-N(1)-)-methyltransferase, found in Chlorobium luteolum (strain DSM 273 / BCRC 81028 / 2530) (Pelodictyon luteolum).